We begin with the raw amino-acid sequence, 681 residues long: DNA ligase (681 aa).

NAD(+) is bound by residues 45–49 (DFDFD), 94–95 (SL), and glutamate 120. Residue lysine 122 is the N6-AMP-lysine intermediate of the active site. Residues arginine 143, glutamate 177, lysine 289, and lysine 313 each contribute to the NAD(+) site. Zn(2+) is bound by residues cysteine 403, cysteine 406, cysteine 421, and cysteine 426. A BRCT domain is found at 593–681 (ADQQPFAGQS…SLKIDFKNLI (89 aa)).

The protein belongs to the NAD-dependent DNA ligase family. LigA subfamily. It depends on Mg(2+) as a cofactor. Requires Mn(2+) as cofactor.

It carries out the reaction NAD(+) + (deoxyribonucleotide)n-3'-hydroxyl + 5'-phospho-(deoxyribonucleotide)m = (deoxyribonucleotide)n+m + AMP + beta-nicotinamide D-nucleotide.. In terms of biological role, DNA ligase that catalyzes the formation of phosphodiester linkages between 5'-phosphoryl and 3'-hydroxyl groups in double-stranded DNA using NAD as a coenzyme and as the energy source for the reaction. It is essential for DNA replication and repair of damaged DNA. The chain is DNA ligase from Leptospira interrogans serogroup Icterohaemorrhagiae serovar Lai (strain 56601).